Reading from the N-terminus, the 521-residue chain is HTH-type transcriptional regulatory protein TyrR (521 aa).

Residues 2 to 72 form the ACT domain; that stretch reads RLEVFCQDRI…GVTDVRTVPY (71 aa). Residues 78-120 form the PAS domain; sequence EHRVLSALLVAMPEPVFSVDLRTKVELANPAAQNLFNLDENKI. The Sigma-54 factor interaction domain maps to 207–436; sequence IVAVTPRMRQ…LKNALYRALT (230 aa). ATP contacts are provided by residues 235 to 242 and 298 to 307; these read GDTGTGKD and ANGGSVLLDE. A DNA-binding region (H-T-H motif) is located at residues 489-509; it reads STRKLAKRLGVSHTAIANKLR.

As to quaternary structure, homodimer. In presence of tyrosine (or high concentrations of phenylalanine or tryptophan) and ATP, it self-associates to form an hexamer.

The protein resides in the cytoplasm. In terms of biological role, dual transcriptional regulator of the TyrR regulon, which includes a number of genes coding for proteins involved in the biosynthesis or transport of the three aromatic amino acids, phenylalanine, tyrosine and tryptophan. These three aromatic amino acids act as effectors which bind to the TyrR protein to form an active regulatory protein. Acts by binding specifically to TyrR boxes in the promoter region of the target genes. This is HTH-type transcriptional regulatory protein TyrR from Enterobacter agglomerans (Erwinia herbicola).